Here is a 372-residue protein sequence, read N- to C-terminus: Partitioning defective 6 homolog beta (372 aa).

S11 is modified (phosphoserine). A PB1 domain is found at 16-96 (TMEVKSKFGA…PLLRIFIQKK (81 aa)). Positions 126–253 (RKKPHIVISM…ITVRPANQRN (128 aa)) are interaction with PARD3 and CDC42. A Pseudo-CRIB domain is found at 133–150 (ISMPQDFRPVSSIIDVDI). A PDZ domain is found at 157 to 250 (RVRLYKYGTE…NLIITVRPAN (94 aa)). The span at 253–272 (NNVVRNSRTSGSSGQSTDNS) shows a compositional bias: polar residues. Residues 253 to 292 (NNVVRNSRTSGSSGQSTDNSLLGYPQQIEPSFEPEDEDSE) form a disordered region.

The protein belongs to the PAR6 family. In terms of assembly, interacts with PARD3. Interacts with GTP-bound forms of CDC42 and RAC1. Interacts with GTP-bound RHOQ/TC10. Interacts with PALS1. Interacts with the N-terminal part of PRKCI and PRKCZ. Part of a complex with PARD3, CDC42 or RAC1 and PRKCI or PRKCZ. Part of a complex with LLGL1 and PRKCI. Interacts with PARD3B. Interacts with ECT2. Expressed in pancreas and in both adult and fetal kidney. Weakly expressed in placenta and lung. Not expressed in other tissues.

It is found in the cytoplasm. It localises to the cell membrane. The protein resides in the cell junction. The protein localises to the tight junction. Adapter protein involved in asymmetrical cell division and cell polarization processes. Probably involved in formation of epithelial tight junctions. Association with PARD3 may prevent the interaction of PARD3 with F11R/JAM1, thereby preventing tight junction assembly. The PARD6-PARD3 complex links GTP-bound Rho small GTPases to atypical protein kinase C proteins. The sequence is that of Partitioning defective 6 homolog beta (PARD6B) from Homo sapiens (Human).